Consider the following 585-residue polypeptide: Aspartate--tRNA(Asp/Asn) ligase (585 aa).

Glutamate 175 is a binding site for L-aspartate. Residues 199–202 (QLFK) are aspartate. Arginine 221 provides a ligand contact to L-aspartate. Residues 221–223 (RDE) and glutamine 230 contribute to the ATP site. Histidine 448 contacts L-aspartate. Position 482 (glutamate 482) interacts with ATP. Arginine 489 is an L-aspartate binding site. ATP is bound at residue 534–537 (GLDR).

Belongs to the class-II aminoacyl-tRNA synthetase family. Type 1 subfamily. Homodimer.

Its subcellular location is the cytoplasm. The catalysed reaction is tRNA(Asx) + L-aspartate + ATP = L-aspartyl-tRNA(Asx) + AMP + diphosphate. In terms of biological role, aspartyl-tRNA synthetase with relaxed tRNA specificity since it is able to aspartylate not only its cognate tRNA(Asp) but also tRNA(Asn). Reaction proceeds in two steps: L-aspartate is first activated by ATP to form Asp-AMP and then transferred to the acceptor end of tRNA(Asp/Asn). This chain is Aspartate--tRNA(Asp/Asn) ligase, found in Natranaerobius thermophilus (strain ATCC BAA-1301 / DSM 18059 / JW/NM-WN-LF).